The following is a 279-amino-acid chain: HTH-type transcriptional regulator HdfR (279 aa).

An HTH lysR-type domain is found at 1-58 (MDTELLKTFLEVSRTRHFGRAAESLYLTQSAVSFRIRQLENQLGVNLFTRHRNNIRLT). The segment at residues 18–37 (FGRAAESLYLTQSAVSFRIR) is a DNA-binding region (H-T-H motif).

This sequence belongs to the LysR transcriptional regulatory family.

In terms of biological role, negatively regulates the transcription of the flagellar master operon flhDC by binding to the upstream region of the operon. The polypeptide is HTH-type transcriptional regulator HdfR (Escherichia coli O6:K15:H31 (strain 536 / UPEC)).